The primary structure comprises 624 residues: Alpha-amylase 1 (624 aa).

The N-terminal stretch at 1–28 (MLLINFFIAVLGVISLSPIVVARYILRR) is a signal peptide. The CBM21 domain maps to 40–133 (ESVTGSNHVQ…SDTSVTYTTS (94 aa)). C177 and C185 are joined by a disulfide. W230 provides a ligand contact to substrate. N268 serves as a coordination point for Ca(2+). Residue H269 participates in substrate binding. C297 and C311 form a disulfide bridge. The N-linked (GlcNAc...) asparagine glycan is linked to N304. Ca(2+) contacts are provided by E309 and D322. N344 carries an N-linked (GlcNAc...) asparagine glycan. R351 lines the substrate pocket. Residues D353, H357, and E377 each coordinate Ca(2+). D353 serves as the catalytic Nucleophile. Substrate is bound at residue 356 to 357 (KH). E377 (proton donor) is an active-site residue. Substrate is bound at residue G381. The cysteines at positions 387 and 430 are disulfide-linked. Residues D444 and R491 each contribute to the substrate site. The cysteines at positions 587 and 622 are disulfide-linked.

The protein belongs to the glycosyl hydrolase 13 family. Ca(2+) serves as cofactor.

It localises to the secreted. It catalyses the reaction Endohydrolysis of (1-&gt;4)-alpha-D-glucosidic linkages in polysaccharides containing three or more (1-&gt;4)-alpha-linked D-glucose units.. In Lipomyces kononenkoae (Yeast), this protein is Alpha-amylase 1 (LKA1).